Reading from the N-terminus, the 572-residue chain is MARILITSAIPYINGIKHLGNLVGSQLPADLYARYMRGRGHEVMFICATDEHGTPAELAAAKAGKPVEDYCAEMHEVQKEIAAGFRLSFDHFGRSSSARNHRLTQHFAGALAENGFIEEVVERQFFSVADNRFLPDRYIEGTCPNCGYDKARGDQCENCTKQLDPTDLIDPRSAISGSTELELRETKHLYLRQRALKDEIEAWIDSKTDWPVLTTSIAKKWLHDGEGLQDRGITRDLKWGVPVRKGSEPWPGMEGKVFYVWFDAPIEYIAGTAEWADANGKTDADWERWWRTDRGAEDVRYVQFMGKDNVPFHTLSFPATIMGSREPWKLVDYIKSFNYLNYDGGQFSTSQGRGVFMDQALSILPADYWRWWLLSHAPENSDSEFTWENFQSSVNKDLADVLGNLVSRVTKFCRSKFGETVPAGGSPGEREHQLVAELQQRLAAYEACMEAMEVRKAASELRALWVAGNEYLQSAAPWTVVKTDPEQAQAMIRLALNLIRLYAVISRPFIPDAAASMMTSLGCEDWSWPADVGRALEVLPAGHGFTTPEVLFRKITDEERAEWQTRFSGVRS.

The 'HIGH' region signature appears at 11 to 21 (PYINGIKHLGN). Residues Cys143, Cys146, Cys156, and Cys159 each contribute to the Zn(2+) site. A 'KMSKS' region motif is present at residues 346–350 (QFSTS). Thr349 is an ATP binding site.

It belongs to the class-I aminoacyl-tRNA synthetase family. MetG type 1 subfamily. Monomer. The cofactor is Zn(2+).

It localises to the cytoplasm. It carries out the reaction tRNA(Met) + L-methionine + ATP = L-methionyl-tRNA(Met) + AMP + diphosphate. Its function is as follows. Is required not only for elongation of protein synthesis but also for the initiation of all mRNA translation through initiator tRNA(fMet) aminoacylation. This is Methionine--tRNA ligase from Cereibacter sphaeroides (strain ATCC 17029 / ATH 2.4.9) (Rhodobacter sphaeroides).